The following is a 115-amino-acid chain: Large ribosomal subunit protein uL18 (115 aa).

Positions 1–29 (MISKPDKNKLRQKRHTRVRGKISGTSETP) are disordered. The span at 10 to 20 (LRQKRHTRVRG) shows a compositional bias: basic residues.

This sequence belongs to the universal ribosomal protein uL18 family. As to quaternary structure, part of the 50S ribosomal subunit; part of the 5S rRNA/L5/L18/L25 subcomplex. Contacts the 5S and 23S rRNAs.

This is one of the proteins that bind and probably mediate the attachment of the 5S RNA into the large ribosomal subunit, where it forms part of the central protuberance. The polypeptide is Large ribosomal subunit protein uL18 (Lactococcus lactis subsp. lactis (strain IL1403) (Streptococcus lactis)).